Here is a 1712-residue protein sequence, read N- to C-terminus: Gag-Pol polyprotein (1712 aa).

Residue Gly2 is the site of N-myristoyl glycine; by host attachment. Disordered stretches follow at residues 97-208 (VRPF…NRPQ), 416-440 (RETP…RHKE), and 487-518 (DCPK…PPEP). The segment covering 100–119 (FLPPPKPPTPLPQPLSPQPS) has biased composition (pro residues). The PTAP/PSAP motif signature appears at 107-110 (PTPL). Residues 120–132 (APLTSSLYPVLPK) show a composition bias toward low complexity. The short motif at 126 to 130 (LYPVL) is the LYPX(n)L motif element. Pro residues-rich tracts occupy residues 136–146 (PKPPVLPPDPS) and 156–171 (EPPP…PSGP). The PPXY motif signature appears at 157 to 160 (PPPY). Basic and acidic residues predominate over residues 416–434 (RETPEEREERLWQRQEERD). Residues 473 to 490 (DQCAYCKEKGHWVRDCPK) form a CCHC-type zinc finger. A compositionally biased stretch (polar residues) spans 497 to 512 (ANSTLLNLGDQESQGQ). The 71-residue stretch at 529–599 (VTFLVDTGAQ…CPYPLLGRDL (71 aa)) folds into the Peptidase A2 domain. The active-site Protease; shared with dimeric partner is the Asp534. One can recognise a Reverse transcriptase domain in the interval 708–899 (LDQGILKPCQ…QEVTYLGYSL (192 aa)). The Mg(2+) site is built by Asp776, Asp850, Asp851, Asp1150, Glu1188, Asp1209, and Asp1279. The RNase H type-1 domain occupies 1141 to 1287 (PDADLTWYTD…ADDTAKKAAT (147 aa)). The disordered stretch occupies residues 1262–1289 (PGHQKGDSPQAKGNRLADDTAKKAATET). The span at 1276 to 1287 (RLADDTAKKAAT) shows a compositional bias: basic and acidic residues. The segment at 1354–1394 (HKLTHLSARKMKTLLEREETGFYLPNRDLHLRQVTESCRAC) adopts an HHCC-type zinc-finger fold. The region spanning 1411–1569 (RGRRPGTHWE…TPFEILYGAP (159 aa)) is the Integrase catalytic domain. Mg(2+) contacts are provided by Asp1422 and Asp1481. The tract at residues 1676 to 1703 (GPTTNQDLSDSPSSDDPSRWKVQRTQNP) is disordered.

It belongs to the retroviral Pol polyprotein family. Homohexamer; further associates as homomultimer. The virus core is composed of a lattice formed from hexagonal rings, each containing six capsid monomers. In terms of assembly, interacts (via PPXY motif) with host NEDD4. Interacts (via PSAP motif) with host TSG101. Interacts (via LYPX(n)L motif) with host PDCD6IP. As to quaternary structure, the reverse transcriptase is a monomer (Potential). Interacts (via RNase domains) with host release factor ETF1; this interaction is essential for translational readthrough of amber codon between viral gag and pol genes, as well as for viral replication. Homodimer. Requires Mg(2+) as cofactor. Post-translationally, specific enzymatic cleavages by the viral protease yield mature proteins. The protease is released by autocatalytic cleavage. The polyprotein is cleaved during and after budding, this process is termed maturation. Phosphorylated on serine residues.

It localises to the virion. Its subcellular location is the host cell membrane. It is found in the host late endosome membrane. The protein resides in the host endosome. The protein localises to the host multivesicular body. It localises to the host cytoplasm. The enzyme catalyses DNA(n) + a 2'-deoxyribonucleoside 5'-triphosphate = DNA(n+1) + diphosphate. It carries out the reaction Endonucleolytic cleavage to 5'-phosphomonoester.. Its activity is regulated as follows. Most efficiently inhibited by Amprenavir, which is able to block Gag-Pol processing in infected cells. Its function is as follows. Plays a role in budding and is processed by the viral protease during virion maturation outside the cell. During budding, it recruits, in a PPXY-dependent or independent manner, Nedd4-like ubiquitin ligases that conjugate ubiquitin molecules to Gag-Pol, or to Gag-Pol binding host factors. Interaction with HECT ubiquitin ligases probably links the viral protein to the host ESCRT pathway and facilitates release. Targets Gag and gag-pol polyproteins to the plasma membrane via a multipartite membrane binding signal, that includes its myristoylated N-terminus. Also mediates nuclear localization of the pre-integration complex. Functionally, constituent of the pre-integration complex (PIC) which tethers the latter to mitotic chromosomes. This allows the integration of the viral genome into the host DNA. In terms of biological role, forms the spherical core of the virion that encapsulates the genomic RNA-nucleocapsid complex. Its function is as follows. Involved in the packaging and encapsidation of two copies of the genome. Binds with high affinity to conserved UCUG elements within the packaging signal, located near the 5'-end of the genome. This binding is dependent on genome dimerization. Acts as a nucleic acid chaperone which is involved in rearrangement of nucleic acid secondary structures during gRNA retrotranscription. The aspartyl protease mediates proteolytic cleavages of Gag and Gag-Pol polyproteins during or shortly after the release of the virion from the plasma membrane. Cleavages take place as an ordered, step-wise cascade to yield mature proteins. This process is called maturation. Displays maximal activity during the budding process just prior to particle release from the cell. Functionally, RT is a multifunctional enzyme that converts the viral dimeric RNA genome into dsDNA in the cytoplasm, shortly after virus entry into the cell. This enzyme displays a DNA polymerase activity that can copy either DNA or RNA templates, and a ribonuclease H (RNase H) activity that cleaves the RNA strand of RNA-DNA heteroduplexes in a partially processive 3' to 5' endonucleasic mode. Conversion of viral genomic RNA into dsDNA requires many steps. A tRNA binds to the primer-binding site (PBS) situated at the 5' end of the viral RNA. RT uses the 3' end of the tRNA primer to perform a short round of RNA-dependent minus-strand DNA synthesis. The reading proceeds through the U5 region and ends after the repeated (R) region which is present at both ends of viral RNA. The portion of the RNA-DNA heteroduplex is digested by the RNase H, resulting in a ssDNA product attached to the tRNA primer. This ssDNA/tRNA hybridizes with the identical R region situated at the 3' end of viral RNA. This template exchange, known as minus-strand DNA strong stop transfer, can be either intra- or intermolecular. RT uses the 3' end of this newly synthesized short ssDNA to perform the RNA-dependent minus-strand DNA synthesis of the whole template. RNase H digests the RNA template except for a polypurine tract (PPT) situated at the 5' end of the genome. It is not clear if both polymerase and RNase H activities are simultaneous. RNase H probably can proceed both in a polymerase-dependent (RNA cut into small fragments by the same RT performing DNA synthesis) and a polymerase-independent mode (cleavage of remaining RNA fragments by free RTs). Secondly, RT performs DNA-directed plus-strand DNA synthesis using the PPT that has not been removed by RNase H as primers. PPT and tRNA primers are then removed by RNase H. The 3' and 5' ssDNA PBS regions hybridize to form a circular dsDNA intermediate. Strand displacement synthesis by RT to the PBS and PPT ends produces a blunt ended, linear dsDNA copy of the viral genome that includes long terminal repeats (LTRs) at both ends. In terms of biological role, catalyzes viral DNA integration into the host chromosome, by performing a series of DNA cutting and joining reactions. This enzyme activity takes place after virion entry into a cell and reverse transcription of the RNA genome in dsDNA. The first step in the integration process is 3' processing. This step requires a complex comprising the viral genome, matrix protein and integrase. This complex is called the pre-integration complex (PIC). The integrase protein removes 2 nucleotides from each 3' end of the viral DNA, leaving recessed CA OH's at the 3' ends. In the second step that requires cell division, the PIC enters cell nucleus. In the third step, termed strand transfer, the integrase protein joins the previously processed 3' ends to the 5' ends of strands of target cellular DNA at the site of integration. The last step is viral DNA integration into host chromosome. This is Gag-Pol polyprotein (pol) from Feline leukemia virus.